The primary structure comprises 601 residues: DNA ligase (601 aa).

Residue aspartate 258 coordinates ATP. Lysine 260 acts as the N6-AMP-lysine intermediate in catalysis. Residues arginine 265, arginine 280, glutamate 310, phenylalanine 350, arginine 427, and lysine 433 each contribute to the ATP site. Residues 568-601 (DKSPEDATTTDEILEMYNKQPKKKIESPPIDESV) are disordered.

Belongs to the ATP-dependent DNA ligase family. Mg(2+) serves as cofactor.

It carries out the reaction ATP + (deoxyribonucleotide)n-3'-hydroxyl + 5'-phospho-(deoxyribonucleotide)m = (deoxyribonucleotide)n+m + AMP + diphosphate.. Functionally, DNA ligase that seals nicks in double-stranded DNA during DNA replication, DNA recombination and DNA repair. The protein is DNA ligase of Saccharolobus islandicus (strain Y.N.15.51 / Yellowstone #2) (Sulfolobus islandicus).